Here is a 355-residue protein sequence, read N- to C-terminus: Peptide chain release factor 1 (355 aa).

Position 233 is an N5-methylglutamine (Gln-233). Positions 280 to 293 (ERRKKEQERADSRR) are enriched in basic and acidic residues. The interval 280–306 (ERRKKEQERADSRRGQVGSGNRSERIR) is disordered.

The protein belongs to the prokaryotic/mitochondrial release factor family. Methylated by PrmC. Methylation increases the termination efficiency of RF1.

The protein resides in the cytoplasm. Peptide chain release factor 1 directs the termination of translation in response to the peptide chain termination codons UAG and UAA. The polypeptide is Peptide chain release factor 1 (Rickettsia africae (strain ESF-5)).